Reading from the N-terminus, the 1298-residue chain is Histone-lysine N-methyltransferase EHMT1 (1298 aa).

Disordered stretches follow at residues 1–111 and 144–192; these read MAAA…HVTA and ASSL…RKLP. Residue Ala2 is modified to N-acetylalanine. Residue Lys22 forms a Glycyl lysine isopeptide (Lys-Gly) (interchain with G-Cter in SUMO1); alternate linkage. A Glycyl lysine isopeptide (Lys-Gly) (interchain with G-Cter in SUMO2); alternate cross-link involves residue Lys22. Residues 38 to 50 show a composition bias toward basic and acidic residues; sequence SAEKQAGEAHMAA. Polar residues-rich tracts occupy residues 54 to 67 and 76 to 89; these read TNGS…SSHA and SARV…NTLT. Basic and acidic residues predominate over residues 96 to 105; that stretch reads VSERDSEAAK. Residues Lys190, Lys199, Lys231, Lys234, Lys317, and Lys327 each participate in a glycyl lysine isopeptide (Lys-Gly) (interchain with G-Cter in SUMO2) cross-link. The interval 211 to 234 is disordered; sequence VVGLHAASKDPREVREARDHKEPK. A compositionally biased stretch (basic and acidic residues) spans 217-234; it reads ASKDPREVREARDHKEPK. Positions 339-479 are disordered; it reads VNGESLEMDS…QTAPGDSTGY (141 aa). Positions 344–360 are enriched in acidic residues; it reads LEMDSDEDDSEELEEDD. The span at 373–393 shows a compositional bias: basic and acidic residues; that stretch reads EDSRTSKESMSEADRAQKMDG. Residues 394 to 416 are compositionally biased toward acidic residues; the sequence is ESEEEQESVDTGEEEEGGDESDL. Lys432 is covalently cross-linked (Glycyl lysine isopeptide (Lys-Gly) (interchain with G-Cter in SUMO2)). Ser435 carries the post-translational modification Phosphoserine. Basic residues predominate over residues 440–452; that stretch reads PARKRRRRSRKKP. A compositionally biased stretch (polar residues) spans 460-474; it reads SYKSSAGSAEQTAPG. At Ser483 the chain carries Phosphoserine. Residues Lys492, Lys559, Lys644, Lys659, Lys684, and Lys731 each participate in a glycyl lysine isopeptide (Lys-Gly) (interchain with G-Cter in SUMO2) cross-link. Residues 644–717 form a disordered region; the sequence is KADTTSTVTP…TPGLSQGPGK (74 aa). 8 ANK repeats span residues 737–766, 772–801, 805–834, 838–868, 872–901, 905–934, 938–967, and 971–1004; these read FHPK…DPNF, NKRS…NIDT, DQRT…LVDP, EGST…DVNC, GGWT…DINI, EENI…DLHA, HGDS…DVTL, and EGET…DRPS. A histone H3K9me binding region spans residues 905–907; it reads EEN. Phosphoserine occurs at positions 1004 and 1048. The region spanning 1060–1123 is the Pre-SET domain; the sequence is QYCVCIDDCS…NCRNRVVQNG (64 aa). Positions 1062, 1064, 1068, 1073, 1075, 1105, 1109, 1111, and 1115 each coordinate Zn(2+). One can recognise an SET domain in the interval 1126 to 1243; sequence ARLQLYRTRD…AGEQLGFDYG (118 aa). Residues 1136 to 1138, Tyr1173, and 1200 to 1201 contribute to the S-adenosyl-L-methionine site; these read MGW and NH. Residues 1162–1181 are interaction with histone H3; that stretch reads DSEADVREEDSYLFDLDNKD. Residue Cys1203 participates in Zn(2+) binding. The interaction with histone H3 stretch occupies residues 1242-1245; the sequence is YGER. A Zn(2+)-binding site is contributed by Cys1256. Position 1257 (Arg1257) interacts with S-adenosyl-L-methionine. Cys1258 and Cys1263 together coordinate Zn(2+). Residues 1274 to 1298 form a disordered region; sequence QASAAQEAQEDGLPDTSSAAAADPL.

It belongs to the class V-like SAM-binding methyltransferase superfamily. Heterodimer; heterodimerizes with EHMT2. Interacts with WIZ and EHMT2. Part of the E2F6.com-1 complex in G0 phase composed of E2F6, MGA, MAX, TFDP1, CBX3, BAT8, EHMT1, RING1, RNF2, MBLR, L3MBTL2 and YAF2. Interacts (via ANK repeats) with RELA (when monomethylated at 'Lys-310'). Interacts with MPHOSPH8. Interacts with CDYL. Interacts with REST only in the presence of CDYL. Part of a complex containing at least CDYL, REST, WIZ, SETB1, EHMT1 and EHMT2. Interacts with BAZ2B. In terms of tissue distribution, widely expressed.

The protein resides in the nucleus. It localises to the chromosome. The catalysed reaction is N(6)-methyl-L-lysyl(9)-[histone H3] + S-adenosyl-L-methionine = N(6),N(6)-dimethyl-L-lysyl(9)-[histone H3] + S-adenosyl-L-homocysteine + H(+). It catalyses the reaction L-lysyl(9)-[histone H3] + S-adenosyl-L-methionine = N(6)-methyl-L-lysyl(9)-[histone H3] + S-adenosyl-L-homocysteine + H(+). Its activity is regulated as follows. Methyltransferase activity is inhibited by BIX-01294. Efficiently inhibited by compound E72, a BIX-01294 derivative in which the diazepane ring and the benzyl are replaced with a 3-dimethylaminopropyl and a 5-aminopentyl group at sites B and C, respectively. Functionally, histone methyltransferase that specifically mono- and dimethylates 'Lys-9' of histone H3 (H3K9me1 and H3K9me2, respectively) in euchromatin. H3K9me represents a specific tag for epigenetic transcriptional repression by recruiting HP1 proteins to methylated histones. Also weakly methylates 'Lys-27' of histone H3 (H3K27me). Also required for DNA methylation, the histone methyltransferase activity is not required for DNA methylation, suggesting that these 2 activities function independently. Probably targeted to histone H3 by different DNA-binding proteins like E2F6, MGA, MAX and/or DP1. During G0 phase, it probably contributes to silencing of MYC- and E2F-responsive genes, suggesting a role in G0/G1 transition in cell cycle. In addition to the histone methyltransferase activity, also methylates non-histone proteins: mediates dimethylation of 'Lys-373' of p53/TP53. Represses the expression of mitochondrial function-related genes, perhaps by occupying their promoter regions, working in concert with probable chromatin reader BAZ2B. This is Histone-lysine N-methyltransferase EHMT1 (EHMT1) from Homo sapiens (Human).